A 498-amino-acid chain; its full sequence is NADH-quinone oxidoreductase subunit N (498 aa).

Helical transmembrane passes span 10 to 30, 44 to 64, 68 to 88, 109 to 129, 130 to 150, 164 to 184, 207 to 227, 239 to 259, 273 to 293, 301 to 321, 328 to 348, 377 to 397, 412 to 434, and 458 to 478; these read LMPL…MLLI, VVGL…GKFV, VMGM…ILVA, ELYL…ASSH, YASF…LLAY, YLVL…YIYA, VLLG…LAPF, PAPM…GLFV, LVTV…LLAV, ILGY…ISMT, VTVY…AVAL, ATLT…GFIG, FLAA…VMVV, and LMVL…DPMI.

The protein belongs to the complex I subunit 2 family. In terms of assembly, NDH-1 is composed of 14 different subunits. Subunits NuoA, H, J, K, L, M, N constitute the membrane sector of the complex.

The protein localises to the cell inner membrane. The catalysed reaction is a quinone + NADH + 5 H(+)(in) = a quinol + NAD(+) + 4 H(+)(out). NDH-1 shuttles electrons from NADH, via FMN and iron-sulfur (Fe-S) centers, to quinones in the respiratory chain. The immediate electron acceptor for the enzyme in this species is believed to be ubiquinone. Couples the redox reaction to proton translocation (for every two electrons transferred, four hydrogen ions are translocated across the cytoplasmic membrane), and thus conserves the redox energy in a proton gradient. The chain is NADH-quinone oxidoreductase subunit N from Acinetobacter baumannii (strain AB0057).